The following is a 499-amino-acid chain: AP-1-like transcription factor CAP1 (499 aa).

The interval 1 to 64 (MTDIKRNFSD…RAYRERKERK (64 aa)) is disordered. 2 consecutive short sequence motifs (bipartite nuclear localization signal) follow at residues 20 to 27 (TKKLHVDS) and 44 to 51 (SKRTAQNR). The 64-residue stretch at 40–103 (TEPKSKRTAQ…DVLKNELAKY (64 aa)) folds into the bZIP domain. Positions 43–66 (KSKRTAQNRAAQRAYRERKERKMK) are basic motif. A coiled-coil region spans residues 49 to 105 (QNRAAQRAYRERKERKMKELEDKVRLLEDANVRALTETDFLRAQVDVLKNELAKYTG). The leucine-zipper stretch occupies residues 68 to 75 (LEDKVRLL). The interval 104–215 (TGGSDFSDLN…SSTPLNDNLL (112 aa)) is disordered. The span at 123 to 148 (HPNNHHSNVSTGTPHGSMSSSNSVAS) shows a compositional bias: polar residues. Composition is skewed to low complexity over residues 155 to 164 (SSASSVSNNS) and 186 to 215 (QQQQQKVPQGVPDLVSGSSSSSTPLNDNLL). The interval 254–261 (CVKLNEAC) is n-CRD. 2 disulfides stabilise this stretch: Cys-254–Cys-446 and Cys-261–Cys-477. Positions 408–442 (PEKQEKGKYEPPSTSKTTNNNEEEDKDEVVPAPPQ) are disordered. Positions 417–427 (EPPSTSKTTNN) are enriched in low complexity. The segment at 446-477 (CSEIWDRITSHPKYTELDIDGLCNELKSKAKC) is c-CRD. The Nuclear export signal signature appears at 462–469 (LDIDGLCN).

It belongs to the bZIP family. YAP subfamily. As to quaternary structure, interacts with YBP1. In terms of processing, upon oxidative stress, is oxidated by the peroxidase GPX3 and stabilized by YBP1. Oxidative stress induces conformational changes through oxidation of cysteine residues, masking the nuclear export signal, thus abolishing nuclear export by CRM1/exportin 1. Phosphorylated in response to H(2)O(2).

It is found in the nucleus. It localises to the cytoplasm. Transcription activator involved in multidrug resistance, oxidative stress response, and redox homeostasis. Preferentially binds to promoters with the core binding site 5'-TTA[CG]TAA-3'. Involved in the oxidative stress response in via multiple pathways, including the cellular antioxidant defense system, carbohydrate metabolism and energy metabolism, protein degradation, ATP-dependent RNA helicase, and resistance pathways. The ability of the major systemic fungal pathogen of humans to sense and respond to reactive oxygen species, such as H(2)O(2) generated by the host immune system, is required for survival in the host and therefore virulence. Regulates the transcription of COR33, GLR1, GTO1, GTT1, GTT1, TRR1, TRX1, SOD1, CAT1, and the transcription regulator TSA1. Participates in the apoptosis by regulating the expression of the glutathione reductase gene and glutathione content. Also plays a role in the peroxide-mediated induction of MDR1 and other drug response genes such as PDR16, MDR1, FLU1, YCF1, and FCR1. Regulates trehalose accumulation which is important for the oxidative stress tolerance. Recruits ADA2 to its target promoters. Activity of CAP1 is controlled through oxidation of specific cysteine residues resulting in the alteration of its subcellular location. Oxidative stress induces nuclear accumulation and as a result CAP1 transcriptional activity. Nuclear export is restored when disulfide bonds are reduced by thioredoxin, whose expression is controlled by CAP1, providing a mechanism for negative autoregulation. In Candida albicans (strain SC5314 / ATCC MYA-2876) (Yeast), this protein is AP-1-like transcription factor CAP1.